Reading from the N-terminus, the 237-residue chain is Ribitol-5-phosphate cytidylyltransferase (237 aa).

CTP is bound by residues 7–10 (LAGG), 81–87 (GSDRNES), and Ser-112.

This sequence belongs to the IspD/TarI cytidylyltransferase family. TarI subfamily.

It catalyses the reaction D-ribitol 5-phosphate + CTP + H(+) = CDP-L-ribitol + diphosphate. It functions in the pathway cell wall biogenesis; poly(ribitol phosphate) teichoic acid biosynthesis. Catalyzes the transfer of the cytidylyl group of CTP to D-ribitol 5-phosphate. The chain is Ribitol-5-phosphate cytidylyltransferase from Bacillus spizizenii (strain ATCC 23059 / NRRL B-14472 / W23) (Bacillus subtilis subsp. spizizenii).